The following is a 149-amino-acid chain: Stathmin (149 aa).

Ala2 carries the N-acetylalanine modification. Ser4 is subject to Phosphoserine. Residues 4 to 145 (SDIQVKELEK…NKESKDPADE (142 aa)) enclose the SLD domain. At Lys9 the chain carries N6-acetyllysine. Ser16 is subject to Phosphoserine; by PKA. Ser25 is subject to Phosphoserine; by CDK1, MAPK1 and MAPK3. A disordered region spans residues 27–46 (RSKESVPDFPLSPPKKKDLS). Lys29 is subject to N6-methyllysine. Ser31 is modified (phosphoserine). Phosphoserine; by CDK1, MAPK1 and MAPK3 is present on Ser38. Positions 41–140 (KKKDLSLEEI…EEVRKNKESK (100 aa)) form a coiled coil. Ser63 is subject to Phosphoserine; by PKA. N6-acetyllysine is present on residues Lys100 and Lys119. Over residues 104–143 (KMEANKENREAQMAAKLERLREKDKHVEEVRKNKESKDPA) the composition is skewed to basic and acidic residues. Residues 104–149 (KMEANKENREAQMAAKLERLREKDKHVEEVRKNKESKDPADETEAD) are disordered.

It belongs to the stathmin family. As to quaternary structure, binds to two alpha/beta-tubulin heterodimers. Interacts with KIST. Many different phosphorylated forms are observed depending on specific combinations among the sites which can be phosphorylated. MAPK is responsible for the phosphorylation of stathmin in response to NGF. Phosphorylation at Ser-16 seems to be required for neuron polarization. Highly expressed in the lateral nucleus of the amygdala.

Its subcellular location is the cytoplasm. The protein localises to the cytoskeleton. In terms of biological role, involved in the regulation of the microtubule (MT) filament system by destabilizing microtubules. Prevents assembly and promotes disassembly of microtubules. Phosphorylation at Ser-16 may be required for axon formation during neurogenesis. Involved in the control of the learned and innate fear. The polypeptide is Stathmin (Stmn1) (Mus musculus (Mouse)).